A 140-amino-acid polypeptide reads, in one-letter code: Mite allergen Der p 21.0101 (140 aa).

Residues 1–19 (MKFIITLFAAIVMAAAVSG) form the signal peptide. 2 immunodominant conformational IgE-binding epitope regions span residues 20 to 53 (FIVGDKKEDEWRMAFDRLMMEELETKIDQVEKGL) and 108 to 140 (YNYEFALESIKLLIKKLDELAKKVKAVNPDEYY).

The protein belongs to the mite group 5 allergen family. Monomer. Homodimer. In terms of tissue distribution, expressed in the epithelium, lumen and microvilli of the midgut, and in feces.

The protein resides in the cytoplasm. Its subcellular location is the endoplasmic reticulum. It localises to the vesicle. It is found in the secreted. The chain is Mite allergen Der p 21.0101 from Dermatophagoides pteronyssinus (European house dust mite).